The sequence spans 395 residues: 8-amino-7-oxononanoate synthase (395 aa).

Substrate is bound at residue Arg-24. 111-112 contributes to the pyridoxal 5'-phosphate binding site; sequence GF. His-136 provides a ligand contact to substrate. Pyridoxal 5'-phosphate contacts are provided by residues Ser-184, 209–212, and 240–243; these read DDAH and TLSK. The residue at position 243 (Lys-243) is an N6-(pyridoxal phosphate)lysine. Thr-357 contacts substrate.

It belongs to the class-II pyridoxal-phosphate-dependent aminotransferase family. BioF subfamily. Homodimer. Requires pyridoxal 5'-phosphate as cofactor.

It catalyses the reaction 6-carboxyhexanoyl-[ACP] + L-alanine + H(+) = (8S)-8-amino-7-oxononanoate + holo-[ACP] + CO2. It functions in the pathway cofactor biosynthesis; biotin biosynthesis. In terms of biological role, catalyzes the decarboxylative condensation of pimeloyl-[acyl-carrier protein] and L-alanine to produce 8-amino-7-oxononanoate (AON), [acyl-carrier protein], and carbon dioxide. In Thermoanaerobacter pseudethanolicus (strain ATCC 33223 / 39E) (Clostridium thermohydrosulfuricum), this protein is 8-amino-7-oxononanoate synthase.